The sequence spans 233 residues: Probable transglycosylase IsaA (233 aa).

An N-terminal signal peptide occupies residues 1 to 29 (MKKTIMASSLAVALGVTGYAAGTGHQAHA).

It belongs to the transglycosylase family. IsaA subfamily.

The protein localises to the secreted. In terms of biological role, is able to cleave peptidoglycan. The polypeptide is Probable transglycosylase IsaA (isaA) (Staphylococcus aureus (strain USA300)).